A 382-amino-acid polypeptide reads, in one-letter code: Phenylalanine dehydrogenase (382 aa).

Position 54 (Arg54) interacts with NAD(+). L-phenylalanine is bound at residue Lys78. The active-site Proton donor/acceptor is Lys90. Residues Asp125, Ser156, Thr160, 190–196 (GLGKVGY), 213–214 (DI), 253–254 (AF), and 274–276 (SAN) contribute to the NAD(+) site. Asn276 contacts L-phenylalanine.

The protein belongs to the Glu/Leu/Phe/Val dehydrogenases family.

The enzyme catalyses L-phenylalanine + NAD(+) + H2O = 3-phenylpyruvate + NH4(+) + NADH + H(+). With respect to regulation, activity is not affected by the metal chelating agent EDTA. Addition of 1 mM Mg(2+) results in 15% increase in activity, while the enzyme is strongly inhibited by 1 mM Fe(3+), Fe(2+), Cu(2+), Zn(2+) and Ag(+). Its function is as follows. Catalyzes the reversible NAD(+)-dependent oxidative deamination of L-phenylalanine to phenylpyruvate. Can also catalyze the oxidative deamination of several other amino acids, with much lower efficiency. Shows activity towards various bulky aromatic alpha-keto acids/esters and (S)-amine alcohols. Can catalyze the amination of 3-(2-chlorophenyl)-2-oxopropionic acid (CPOA) to produce 2-chloro-L-phenylalanine (2-Cl-Phe), a chemical compound used in the pharmaceutical and biotechnology industries. Shows a preference for amination over deamination. The sequence is that of Phenylalanine dehydrogenase from Bacillus thermotolerans (Quasibacillus thermotolerans).